The primary structure comprises 710 residues: Polyribonucleotide nucleotidyltransferase (710 aa).

Residues Asp487 and Asp493 each coordinate Mg(2+). In terms of domain architecture, KH spans 554 to 613 (PKIITMTINPDKIRDVIGPSGKQINKIIEETGVKIDIEQDGTVFISSIDQQMNEKAKKII). The S1 motif domain maps to 623–691 (GEIYLGKVKR…KQGRVNLSRK (69 aa)).

This sequence belongs to the polyribonucleotide nucleotidyltransferase family. Mg(2+) is required as a cofactor.

It localises to the cytoplasm. The catalysed reaction is RNA(n+1) + phosphate = RNA(n) + a ribonucleoside 5'-diphosphate. Its function is as follows. Involved in mRNA degradation. Catalyzes the phosphorolysis of single-stranded polyribonucleotides processively in the 3'- to 5'-direction. The sequence is that of Polyribonucleotide nucleotidyltransferase from Bacillus cytotoxicus (strain DSM 22905 / CIP 110041 / 391-98 / NVH 391-98).